The sequence spans 397 residues: MEPRGTKRKAEKTEVAKTWNKLPRSLPSLRTQPSLYSGPFPFYRRPSELGCFSLDAQRQYHGDARALRYYSPPPINGPGPDFDLRDGYPDRYQPRDEEVRERLDHLLRWVLEHRNQLEGGPGWLAGATVTWRGHLTKLLTTPYERQEGWQLAASRFQGTLYLSEVETPAARAQRLARPPLLRELMYMGYKFEQYMCADKPGGSPDPSGEVNTNVAFCSVLRSRLGNHPLLFSGEVDCLNPQAPCTQPPSCYVELKTSKEMHSPGQWRSFYRHKLLKWWAQSFLPGVPYVVAGFRNPEGFVCSLKTFPTMEMFENVRNDQEGWNPSVCMNFCAAFLSFAQSTVVQDDPRLVHLFSWEPGGPVTVSVHRDAPYAFLPSWYVEAMTQDLPSLSKTPSPKD.

Residues R58, E101, and 131-133 each bind substrate; that span reads WRG. Residue E192 participates in Mg(2+) binding. C217 and E234 together coordinate substrate. E234, D236, E253, and L254 together coordinate Mg(2+). Residues K255 and Q280 each coordinate substrate. T392 bears the Phosphothreonine mark. Residue S394 is modified to Phosphoserine.

It belongs to the DXO/Dom3Z family. Mg(2+) serves as cofactor.

The protein localises to the nucleus. It catalyses the reaction a 5'-end triphospho-ribonucleoside in mRNA + H2O = a 5'-end phospho-ribonucleoside in mRNA + diphosphate + H(+). The catalysed reaction is a 5'-end NAD(+)-phospho-ribonucleoside in mRNA + H2O = a 5'-end phospho-ribonucleoside in mRNA + NAD(+) + H(+). It carries out the reaction a 5'-end NAD(+)-phospho-ribonucleoside in snoRNA + H2O = a 5'-end phospho-ribonucleoside in snoRNA + NAD(+) + H(+). The enzyme catalyses a 5'-end (N(7)-methyl 5'-triphosphoguanosine)-ribonucleoside-ribonucleotide in mRNA + H2O = a (N(7)-methyl 5'-triphosphoguanosine)-nucleoside + a 5'-end phospho-ribonucleoside in mRNA + H(+). It catalyses the reaction a 5'-end FAD-phospho-ribonucleoside in mRNA + H2O = a 5'-end phospho-ribonucleoside in mRNA + FAD + H(+). The catalysed reaction is a 5'-end CoA-ribonucleoside in mRNA + H2O = 3'-dephospho-CoA + a 5'-end phospho-ribonucleoside in mRNA + H(+). Its function is as follows. Decapping enzyme for NAD-capped RNAs: specifically hydrolyzes the nicotinamide adenine dinucleotide (NAD) cap from a subset of RNAs by removing the entire NAD moiety from the 5'-end of an NAD-capped RNA. The NAD-cap is present at the 5'-end of some RNAs and snoRNAs. In contrast to the canonical 5'-end N7 methylguanosine (m7G) cap, the NAD cap promotes mRNA decay. Preferentially acts on NAD-capped transcripts in response to environmental stress. Also acts as a non-canonical decapping enzyme that removes the entire cap structure of m7G capped or incompletely capped RNAs and mediates their subsequent degradation. Specifically degrades pre-mRNAs with a defective 5'-end m7G cap and is part of a pre-mRNA capping quality control. Has decapping activity toward incomplete 5'-end m7G cap mRNAs such as unmethylated 5'-end-capped RNA (cap0), while it has no activity toward 2'-O-ribose methylated m7G cap (cap1). In contrast to canonical decapping enzymes DCP2 and NUDT16, which cleave the cap within the triphosphate linkage, the decapping activity releases the entire cap structure GpppN and a 5'-end monophosphate RNA. Also has 5'-3' exoribonuclease activities: The 5'-end monophosphate RNA is then degraded by the 5'-3' exoribonuclease activity, enabling this enzyme to decap and degrade incompletely capped mRNAs. Also possesses RNA 5'-pyrophosphohydrolase activity by hydrolyzing the 5'-end triphosphate to release pyrophosphates. Exhibits decapping activity towards FAD-capped RNAs. Exhibits decapping activity towards dpCoA-capped RNAs in vitro. The protein is Decapping and exoribonuclease protein of Rattus norvegicus (Rat).